We begin with the raw amino-acid sequence, 103 residues long: Cysteine-rich and transmembrane domain-containing protein 1 (103 aa).

Positions 1–45 (MNQGNPPPYPGPGPTAPYPPYPSQPMGPGFYPPGPPGGPYPPPQG) are enriched in pro residues. A disordered region spans residues 1–66 (MNQGNPPPYP…WQGGPQEPPK (66 aa)). Residues 46 to 56 (GYPYQGYPQYG) show a composition bias toward low complexity. The chain crosses the membrane as a helical span at residues 80–97 (LGTSTCLTACWTALCCCC).

Belongs to the CYSTM1 family.

Its subcellular location is the membrane. The polypeptide is Cysteine-rich and transmembrane domain-containing protein 1 (CYSTM1) (Bos taurus (Bovine)).